Consider the following 429-residue polypeptide: Phosphoglucosamine mutase (429 aa).

S96 acts as the Phosphoserine intermediate in catalysis. S96, D230, D232, and D234 together coordinate Mg(2+). Residue S96 is modified to Phosphoserine.

It belongs to the phosphohexose mutase family. Mg(2+) serves as cofactor. Activated by phosphorylation.

It catalyses the reaction alpha-D-glucosamine 1-phosphate = D-glucosamine 6-phosphate. Catalyzes the conversion of glucosamine-6-phosphate to glucosamine-1-phosphate. The chain is Phosphoglucosamine mutase from Thermotoga maritima (strain ATCC 43589 / DSM 3109 / JCM 10099 / NBRC 100826 / MSB8).